Reading from the N-terminus, the 344-residue chain is Dihydroorotase (344 aa).

Positions 14 and 16 each coordinate Zn(2+). Substrate contacts are provided by residues 16–18 (HLR) and Asn-42. Residues Lys-100, His-137, and His-175 each contribute to the Zn(2+) site. Residue Lys-100 is modified to N6-carboxylysine. His-137 contacts substrate. Leu-220 serves as a coordination point for substrate. Position 248 (Asp-248) interacts with Zn(2+). Asp-248 is a catalytic residue. The substrate site is built by His-252 and Ala-264.

This sequence belongs to the metallo-dependent hydrolases superfamily. DHOase family. Class II DHOase subfamily. Homodimer. Requires Zn(2+) as cofactor.

It carries out the reaction (S)-dihydroorotate + H2O = N-carbamoyl-L-aspartate + H(+). It participates in pyrimidine metabolism; UMP biosynthesis via de novo pathway; (S)-dihydroorotate from bicarbonate: step 3/3. In terms of biological role, catalyzes the reversible cyclization of carbamoyl aspartate to dihydroorotate. The polypeptide is Dihydroorotase (Cupriavidus metallidurans (strain ATCC 43123 / DSM 2839 / NBRC 102507 / CH34) (Ralstonia metallidurans)).